The sequence spans 242 residues: ATP-dependent dethiobiotin synthetase BioD (242 aa).

E12 to V17 is a binding site for ATP. T16 contacts Mg(2+). K37 is an active-site residue. Residue S41 participates in substrate binding. Residues D51 and E112–G115 contribute to the ATP site. Residues D51 and E112 each coordinate Mg(2+).

It belongs to the dethiobiotin synthetase family. In terms of assembly, homodimer. The cofactor is Mg(2+).

Its subcellular location is the cytoplasm. It carries out the reaction (7R,8S)-7,8-diammoniononanoate + CO2 + ATP = (4R,5S)-dethiobiotin + ADP + phosphate + 3 H(+). It functions in the pathway cofactor biosynthesis; biotin biosynthesis; biotin from 7,8-diaminononanoate: step 1/2. Catalyzes a mechanistically unusual reaction, the ATP-dependent insertion of CO2 between the N7 and N8 nitrogen atoms of 7,8-diaminopelargonic acid (DAPA, also called 7,8-diammoniononanoate) to form a ureido ring. In Bacillus cereus (strain G9842), this protein is ATP-dependent dethiobiotin synthetase BioD.